The chain runs to 143 residues: Small ribosomal subunit protein uS11c (143 aa).

Belongs to the universal ribosomal protein uS11 family. As to quaternary structure, part of the 30S ribosomal subunit.

The protein resides in the plastid. Its subcellular location is the chloroplast. This Cenchrus americanus (Pearl millet) protein is Small ribosomal subunit protein uS11c.